The primary structure comprises 1244 residues: Ras-specific guanine nucleotide-releasing factor 2 (1244 aa).

In terms of domain architecture, PH 1 spans 22–129 (EGTKRGYLSK…WVEAIQQASY (108 aa)). Residues 147–189 (VQIVETEKVAANQLRTQLEDQDTEIERLKAEIIALNKTKERMR) adopt a coiled-coil conformation. The region spanning 201–230 (DIKKIKKVQSFMRGWLCRRKWKIIVQDYIC) is the IQ domain. In terms of domain architecture, DH spans 239 to 425 (KRNQIVFNMV…EELSRVMHDE (187 aa)). The PH 2 domain occupies 466–584 (PSVERGKLSK…WTSDISQCID (119 aa)). In terms of domain architecture, N-terminal Ras-GEF spans 631-745 (KVPQIRYASV…PVRTRKLSLN (115 aa)). Disordered stretches follow at residues 704–743 (NRSG…RKLS), 759–814 (TTSS…NAEV), and 843–879 (PESP…AENS). A compositionally biased stretch (basic and acidic residues) spans 706–715 (SGDHVNDKSP). The span at 728 to 743 (SISSRTSSPVRTRKLS) shows a compositional bias: polar residues. Composition is skewed to low complexity over residues 759 to 774 (TTSS…ANPT) and 781 to 806 (NNNN…QSPG). Residues 1009–1241 (SAMEIAEQIT…YDLSLKIEPR (233 aa)) enclose the Ras-GEF domain.

Its subcellular location is the cytoplasm. The protein resides in the cell membrane. It localises to the endoplasmic reticulum membrane. Functionally, functions as a calcium-regulated nucleotide exchange factor activating both Ras and rac1 through the exchange of bound GDP for GTP. May function in synaptic plasticity. The chain is Ras-specific guanine nucleotide-releasing factor 2 (rasgrf2) from Danio rerio (Zebrafish).